The sequence spans 300 residues: tRNA dimethylallyltransferase (300 aa).

11 to 18 (GPTAVGKS) is a binding site for ATP. Residue 13-18 (TAVGKS) participates in substrate binding. The tract at residues 35 to 38 (DSIQ) is interaction with substrate tRNA.

It belongs to the IPP transferase family. As to quaternary structure, monomer. Mg(2+) is required as a cofactor.

The enzyme catalyses adenosine(37) in tRNA + dimethylallyl diphosphate = N(6)-dimethylallyladenosine(37) in tRNA + diphosphate. Functionally, catalyzes the transfer of a dimethylallyl group onto the adenine at position 37 in tRNAs that read codons beginning with uridine, leading to the formation of N6-(dimethylallyl)adenosine (i(6)A). The protein is tRNA dimethylallyltransferase of Borrelia recurrentis (strain A1).